A 198-amino-acid polypeptide reads, in one-letter code: FMN-dependent NADH:quinone oxidoreductase (198 aa).

Residue 96 to 99 participates in FMN binding; sequence MYNF.

This sequence belongs to the azoreductase type 1 family. Homodimer. FMN is required as a cofactor.

The enzyme catalyses 2 a quinone + NADH + H(+) = 2 a 1,4-benzosemiquinone + NAD(+). It carries out the reaction N,N-dimethyl-1,4-phenylenediamine + anthranilate + 2 NAD(+) = 2-(4-dimethylaminophenyl)diazenylbenzoate + 2 NADH + 2 H(+). Its function is as follows. Quinone reductase that provides resistance to thiol-specific stress caused by electrophilic quinones. Functionally, also exhibits azoreductase activity. Catalyzes the reductive cleavage of the azo bond in aromatic azo compounds to the corresponding amines. The protein is FMN-dependent NADH:quinone oxidoreductase of Burkholderia thailandensis (strain ATCC 700388 / DSM 13276 / CCUG 48851 / CIP 106301 / E264).